A 403-amino-acid chain; its full sequence is Imidazolonepropionase (403 aa).

The Fe(3+) site is built by His69 and His71. Zn(2+) is bound by residues His69 and His71. Residues Arg78, Tyr141, and His174 each contribute to the 4-imidazolone-5-propanoate site. Tyr141 contacts N-formimidoyl-L-glutamate. His239 is a binding site for Fe(3+). Position 239 (His239) interacts with Zn(2+). Gln242 serves as a coordination point for 4-imidazolone-5-propanoate. Asp314 provides a ligand contact to Fe(3+). Asp314 provides a ligand contact to Zn(2+). Residues Asn316 and Gly318 each coordinate N-formimidoyl-L-glutamate. Ser319 serves as a coordination point for 4-imidazolone-5-propanoate.

This sequence belongs to the metallo-dependent hydrolases superfamily. HutI family. Zn(2+) serves as cofactor. The cofactor is Fe(3+).

The protein localises to the cytoplasm. The catalysed reaction is 4-imidazolone-5-propanoate + H2O = N-formimidoyl-L-glutamate. Its pathway is amino-acid degradation; L-histidine degradation into L-glutamate; N-formimidoyl-L-glutamate from L-histidine: step 3/3. Functionally, catalyzes the hydrolytic cleavage of the carbon-nitrogen bond in imidazolone-5-propanoate to yield N-formimidoyl-L-glutamate. It is the third step in the universal histidine degradation pathway. This Legionella pneumophila (strain Corby) protein is Imidazolonepropionase.